The primary structure comprises 554 residues: Rab GTPase-binding effector protein 2 (554 aa).

3 disordered regions span residues 1-28 (MAAA…SELS), 167-208 (IQRR…GPAA), and 371-395 (GLRA…DEAL). Basic and acidic residues predominate over residues 14–28 (PQEKQKDASESSELS). The stretch at 15 to 173 (QEKQKDASES…IQEIQRRPRQ (159 aa)) forms a coiled coil. Ser-176, Ser-180, Ser-187, and Ser-191 each carry phosphoserine. A coiled-coil region spans residues 274-509 (DSQWEQLQVE…QAELETSEQV (236 aa)).

This sequence belongs to the rabaptin family. Heterodimer with RABGEF1. The dimer binds RAB5A that has been activated by GTP-binding. Interacts with SDCCAG8; this interaction is important for ciliogenesis regulation. Interacts with RAB4A; this interaction may mediate VEGFR2 cell surface expression.

The protein resides in the cytoplasm. Its subcellular location is the early endosome. It localises to the cytoskeleton. It is found in the microtubule organizing center. The protein localises to the centrosome. The protein resides in the cilium basal body. Plays a role in membrane trafficking and in homotypic early endosome fusion. Participates in arteriogenesis by regulating vascular endothelial growth factor receptor 2/VEGFR2 cell surface expression and endosomal trafficking. By interacting with SDCCAG8, localizes to centrosomes and plays a critical role in ciliogenesis. In Mus musculus (Mouse), this protein is Rab GTPase-binding effector protein 2 (Rabep2).